Consider the following 269-residue polypeptide: D-aminoacyl-tRNA deacylase (269 aa).

This sequence belongs to the DtdA deacylase family. Monomer. It depends on Zn(2+) as a cofactor.

The catalysed reaction is a D-aminoacyl-tRNA + H2O = a tRNA + a D-alpha-amino acid + H(+). It carries out the reaction glycyl-tRNA(Ala) + H2O = tRNA(Ala) + glycine + H(+). Functionally, D-aminoacyl-tRNA deacylase with broad substrate specificity. By recycling D-aminoacyl-tRNA to D-amino acids and free tRNA molecules, this enzyme counteracts the toxicity associated with the formation of D-aminoacyl-tRNA entities in vivo. The chain is D-aminoacyl-tRNA deacylase from Caldivirga maquilingensis (strain ATCC 700844 / DSM 13496 / JCM 10307 / IC-167).